Consider the following 474-residue polypeptide: Glutathione synthetase (474 aa).

Residue A2 is modified to N-acetylalanine. R125 serves as a coordination point for substrate. E144 provides a ligand contact to ATP. Mg(2+) is bound by residues E144 and N146. Residues 148 to 151 (ISAS), 214 to 216 (ERN), Q220, and 267 to 270 (RDGY) contribute to the substrate site. Residues K305, 364–373 (KPQREGGGNN), Y375, and 398–401 (MEKT) contribute to the ATP site. E368 serves as a coordination point for Mg(2+). S415 is modified (phosphoserine). E425 contributes to the ATP binding site. R450 contributes to the substrate binding site. Residues K452 and D458 each coordinate ATP. Position 461–462 (461–462 (VA)) interacts with substrate.

It belongs to the eukaryotic GSH synthase family. Homodimer. The cofactor is Mg(2+).

It catalyses the reaction gamma-L-glutamyl-L-cysteine + glycine + ATP = glutathione + ADP + phosphate + H(+). It functions in the pathway sulfur metabolism; glutathione biosynthesis; glutathione from L-cysteine and L-glutamate: step 2/2. Its function is as follows. Catalyzes the production of glutathione from gamma-glutamylcysteine and glycine in an ATP-dependent manner. Glutathione (gamma-glutamylcysteinylglycine, GSH) is the most abundant intracellular thiol in living aerobic cells and is required for numerous processes including the protection of cells against oxidative damage, amino acid transport, the detoxification of foreign compounds, the maintenance of protein sulfhydryl groups in a reduced state and acts as a cofactor for a number of enzymes. The protein is Glutathione synthetase (GSS) of Macaca fascicularis (Crab-eating macaque).